A 292-amino-acid polypeptide reads, in one-letter code: 3-methyl-2-oxobutanoate hydroxymethyltransferase 2 (292 aa).

The Mg(2+) site is built by aspartate 52 and aspartate 91. 3-methyl-2-oxobutanoate is bound by residues 52-53, aspartate 91, and lysine 120; that span reads DS. Glutamate 122 contributes to the Mg(2+) binding site. Glutamate 189 functions as the Proton acceptor in the catalytic mechanism.

It belongs to the PanB family. In terms of assembly, homodecamer; pentamer of dimers. Mg(2+) serves as cofactor.

The protein resides in the cytoplasm. It catalyses the reaction 3-methyl-2-oxobutanoate + (6R)-5,10-methylene-5,6,7,8-tetrahydrofolate + H2O = 2-dehydropantoate + (6S)-5,6,7,8-tetrahydrofolate. It functions in the pathway cofactor biosynthesis; (R)-pantothenate biosynthesis; (R)-pantoate from 3-methyl-2-oxobutanoate: step 1/2. In terms of biological role, catalyzes the reversible reaction in which hydroxymethyl group from 5,10-methylenetetrahydrofolate is transferred onto alpha-ketoisovalerate to form ketopantoate. The protein is 3-methyl-2-oxobutanoate hydroxymethyltransferase 2 of Bradyrhizobium diazoefficiens (strain JCM 10833 / BCRC 13528 / IAM 13628 / NBRC 14792 / USDA 110).